The chain runs to 432 residues: Trigger factor (432 aa).

The PPIase FKBP-type domain maps to 165-250 (GDFAKIDFEG…LKEIQVKAPQ (86 aa)).

Belongs to the FKBP-type PPIase family. Tig subfamily.

Its subcellular location is the cytoplasm. It catalyses the reaction [protein]-peptidylproline (omega=180) = [protein]-peptidylproline (omega=0). Functionally, involved in protein export. Acts as a chaperone by maintaining the newly synthesized protein in an open conformation. Functions as a peptidyl-prolyl cis-trans isomerase. This chain is Trigger factor, found in Wolinella succinogenes (strain ATCC 29543 / DSM 1740 / CCUG 13145 / JCM 31913 / LMG 7466 / NCTC 11488 / FDC 602W) (Vibrio succinogenes).